The sequence spans 418 residues: Tryptophan synthase beta chain (418 aa).

N6-(pyridoxal phosphate)lysine is present on K109.

It belongs to the TrpB family. Tetramer of two alpha and two beta chains. The cofactor is pyridoxal 5'-phosphate.

The catalysed reaction is (1S,2R)-1-C-(indol-3-yl)glycerol 3-phosphate + L-serine = D-glyceraldehyde 3-phosphate + L-tryptophan + H2O. It participates in amino-acid biosynthesis; L-tryptophan biosynthesis; L-tryptophan from chorismate: step 5/5. In terms of biological role, the beta subunit is responsible for the synthesis of L-tryptophan from indole and L-serine. This chain is Tryptophan synthase beta chain, found in Thermus thermophilus (strain ATCC 27634 / DSM 579 / HB8).